The chain runs to 497 residues: MGQCRNWKWGLESFDFSINRRSSAPGQLESASQMRESWRHKAGRRMFSCPEESDPIQALRKLTELCHLWLRPDLHTKEQILDMLVMEQFMISMPQELQVLVKVNGVQSCKDLEDLLRNNRRPKKWSVVNFLGKEYLMQESDVEMAEIPASVRDDPRGVSSQRASSVNEMRPGEGQASQELQTLPRVPALSRRQEEDFLLPETTVMKSAPKALRPKPTLEKDLNVDREENTGLTSPEPQLPNGPSVVGAKEGKEPKKRASVENVDADTPSACVVEREASTHSGSRGDALNLRCPKRSKPDATSISQEGPQGGATPVGNSESPGKPEINSVYSPGPAGAVSHPNGQEAKELLPFACGVCNKRFTCNSKLAIHMRSHTGERPFQCNFCERCFTQLSDLRVHQRIHTGEKPYTCDICHKRFNRMFSLKCHKRSHTGEKPYKCKDCNQVFTYRKNLNEHKLIHSGEKPYKCPKCLRAFRRPETLKYHQKTHQETTAPRECEG.

The SCAN box domain occupies 41–123 (KAGRRMFSCP…DLLRNNRRPK (83 aa)). The segment at 148–342 (PASVRDDPRG…GPAGAVSHPN (195 aa)) is disordered. Polar residues predominate over residues 158-167 (VSSQRASSVN). Basic and acidic residues-rich tracts occupy residues 216-229 (PTLE…REEN) and 249-259 (KEGKEPKKRAS). C2H2-type zinc fingers lie at residues 352-374 (FACG…MRSH), 380-402 (FQCN…QRIH), 408-430 (YTCD…KRSH), 436-458 (YKCK…KLIH), and 464-486 (YKCP…QKTH).

Its subcellular location is the nucleus. The protein is Putative zinc finger and SCAN domain-containing protein 5D of Homo sapiens (Human).